Reading from the N-terminus, the 310-residue chain is UDP-N-acetylenolpyruvoylglucosamine reductase (310 aa).

An FAD-binding PCMH-type domain is found at 34–213 (RAGGNAEVLF…LRRMNEITSS (180 aa)). Residue Arg-178 is part of the active site. Catalysis depends on Ser-227, which acts as the Proton donor. Glu-297 is an active-site residue.

Belongs to the MurB family. Requires FAD as cofactor.

It is found in the cytoplasm. It catalyses the reaction UDP-N-acetyl-alpha-D-muramate + NADP(+) = UDP-N-acetyl-3-O-(1-carboxyvinyl)-alpha-D-glucosamine + NADPH + H(+). Its pathway is cell wall biogenesis; peptidoglycan biosynthesis. Its function is as follows. Cell wall formation. The protein is UDP-N-acetylenolpyruvoylglucosamine reductase of Parvibaculum lavamentivorans (strain DS-1 / DSM 13023 / NCIMB 13966).